Consider the following 427-residue polypeptide: 3-phosphoshikimate 1-carboxyvinyltransferase (427 aa).

3-phosphoshikimate-binding residues include Lys27, Ser28, and Arg32. Lys27 is a phosphoenolpyruvate binding site. Positions 95 and 123 each coordinate phosphoenolpyruvate. Residues Ser166, Ser167, Gln168, Ser192, Asp305, and Lys332 each contribute to the 3-phosphoshikimate site. Gln168 contacts phosphoenolpyruvate. Catalysis depends on Asp305, which acts as the Proton acceptor. Phosphoenolpyruvate contacts are provided by Arg336 and Arg377.

Belongs to the EPSP synthase family. In terms of assembly, monomer.

It is found in the cytoplasm. The enzyme catalyses 3-phosphoshikimate + phosphoenolpyruvate = 5-O-(1-carboxyvinyl)-3-phosphoshikimate + phosphate. It participates in metabolic intermediate biosynthesis; chorismate biosynthesis. Its function is as follows. Catalyzes the transfer of the enolpyruvyl moiety of phosphoenolpyruvate (PEP) to the 5-hydroxyl of shikimate-3-phosphate (S3P) to produce enolpyruvyl shikimate-3-phosphate and inorganic phosphate. This Aeropyrum pernix (strain ATCC 700893 / DSM 11879 / JCM 9820 / NBRC 100138 / K1) protein is 3-phosphoshikimate 1-carboxyvinyltransferase.